The primary structure comprises 426 residues: Glucose-6-phosphate isomerase (426 aa).

Catalysis depends on Glu276, which acts as the Proton donor. Residues His297 and Lys413 contribute to the active site.

It belongs to the GPI family.

It localises to the cytoplasm. The enzyme catalyses alpha-D-glucose 6-phosphate = beta-D-fructose 6-phosphate. Its pathway is carbohydrate biosynthesis; gluconeogenesis. It participates in carbohydrate degradation; glycolysis; D-glyceraldehyde 3-phosphate and glycerone phosphate from D-glucose: step 2/4. Its function is as follows. Catalyzes the reversible isomerization of glucose-6-phosphate to fructose-6-phosphate. This chain is Glucose-6-phosphate isomerase, found in Mesoplasma florum (strain ATCC 33453 / NBRC 100688 / NCTC 11704 / L1) (Acholeplasma florum).